An 80-amino-acid polypeptide reads, in one-letter code: Small ribosomal subunit protein bS16 (80 aa).

The protein belongs to the bacterial ribosomal protein bS16 family.

The protein is Small ribosomal subunit protein bS16 of Hydrogenovibrio crunogenus (strain DSM 25203 / XCL-2) (Thiomicrospira crunogena).